We begin with the raw amino-acid sequence, 139 residues long: Cystatin-11 (139 aa).

The first 28 residues, 1 to 28 (MAAGSWKATRLLLAILVALVAFSYQVKR), serve as a signal peptide directing secretion. Disulfide bonds link Cys94/Cys102 and Cys115/Cys135. Asn134 is a glycosylation site (N-linked (GlcNAc...) asparagine).

It belongs to the cystatin family. As to expression, expressed in epididymis, where it localizes to the proximal caput and also part of the midcaput. Not detected in other tissues tested.

The protein resides in the secreted. Functionally, has antibacterial activity against the Gram-negative bacteria E.coli. May play a role in sperm maturation and fertilization. The sequence is that of Cystatin-11 from Mus musculus (Mouse).